The following is a 1299-amino-acid chain: DNA-directed RNA polymerase subunit beta' (1299 aa).

Cys-60, Cys-62, Cys-75, and Cys-78 together coordinate Zn(2+). Positions 385–405 (GRRGRPVTGPGNRPLKSLSDM) are disordered. Residues Asp-535, Asp-537, and Asp-539 each contribute to the Mg(2+) site. Positions 886, 962, 969, and 972 each coordinate Zn(2+).

This sequence belongs to the RNA polymerase beta' chain family. As to quaternary structure, the RNAP catalytic core consists of 2 alpha, 1 beta, 1 beta' and 1 omega subunit. When a sigma factor is associated with the core the holoenzyme is formed, which can initiate transcription. The cofactor is Mg(2+). Requires Zn(2+) as cofactor.

The enzyme catalyses RNA(n) + a ribonucleoside 5'-triphosphate = RNA(n+1) + diphosphate. Its function is as follows. DNA-dependent RNA polymerase catalyzes the transcription of DNA into RNA using the four ribonucleoside triphosphates as substrates. The sequence is that of DNA-directed RNA polymerase subunit beta' from Streptomyces coelicolor (strain ATCC BAA-471 / A3(2) / M145).